Here is a 445-residue protein sequence, read N- to C-terminus: tRNA modification GTPase MnmE (445 aa).

Arginine 20, glutamate 79, and lysine 119 together coordinate (6S)-5-formyl-5,6,7,8-tetrahydrofolate. A TrmE-type G domain is found at 215–371; sequence GLKLAIIGPP…ILKNIENIAE (157 aa). Asparagine 225 contributes to the K(+) binding site. GTP contacts are provided by residues 225–230, 244–250, and 269–272; these read NVGKSS, SNIAGTT, and DTAG. Serine 229 contacts Mg(2+). K(+) contacts are provided by serine 244, isoleucine 246, and threonine 249. Mg(2+) is bound at residue threonine 250. Lysine 445 is a (6S)-5-formyl-5,6,7,8-tetrahydrofolate binding site.

The protein belongs to the TRAFAC class TrmE-Era-EngA-EngB-Septin-like GTPase superfamily. TrmE GTPase family. Homodimer. Heterotetramer of two MnmE and two MnmG subunits. It depends on K(+) as a cofactor.

The protein resides in the cytoplasm. Functionally, exhibits a very high intrinsic GTPase hydrolysis rate. Involved in the addition of a carboxymethylaminomethyl (cmnm) group at the wobble position (U34) of certain tRNAs, forming tRNA-cmnm(5)s(2)U34. This Rickettsia conorii (strain ATCC VR-613 / Malish 7) protein is tRNA modification GTPase MnmE.